The sequence spans 354 residues: Peptide chain release factor 1 (354 aa).

Gln-230 carries the post-translational modification N5-methylglutamine. Residues 282–301 (KQASDAIKKQMIGSGDRSER) form a disordered region.

It belongs to the prokaryotic/mitochondrial release factor family. Methylated by PrmC. Methylation increases the termination efficiency of RF1.

The protein resides in the cytoplasm. Its function is as follows. Peptide chain release factor 1 directs the termination of translation in response to the peptide chain termination codons UAG and UAA. The chain is Peptide chain release factor 1 from Leptospira borgpetersenii serovar Hardjo-bovis (strain L550).